Reading from the N-terminus, the 210-residue chain is Large ribosomal subunit protein uL5 (210 aa).

The segment at 188–210 is disordered; the sequence is AKDDPKKAKTKRGPAYYAKKKKK. The span at 195-210 shows a compositional bias: basic residues; the sequence is AKTKRGPAYYAKKKKK.

The protein belongs to the universal ribosomal protein uL5 family. In terms of assembly, part of the 50S ribosomal subunit; part of the 5S rRNA/L5/L18/L25 subcomplex. Contacts the 5S rRNA and the P site tRNA. Forms a bridge to the 30S subunit in the 70S ribosome.

In terms of biological role, this is one of the proteins that bind and probably mediate the attachment of the 5S RNA into the large ribosomal subunit, where it forms part of the central protuberance. In the 70S ribosome it contacts protein S13 of the 30S subunit (bridge B1b), connecting the 2 subunits; this bridge is implicated in subunit movement. Contacts the P site tRNA; the 5S rRNA and some of its associated proteins might help stabilize positioning of ribosome-bound tRNAs. In Cutibacterium acnes (strain DSM 16379 / KPA171202) (Propionibacterium acnes), this protein is Large ribosomal subunit protein uL5.